The chain runs to 247 residues: Uroporphyrinogen-III C-methyltransferase (247 aa).

Residues Pro12, 117–118 (TA), Met168, Ala197, and Ala225 each bind S-adenosyl-L-homocysteine.

The protein belongs to the precorrin methyltransferase family.

It carries out the reaction uroporphyrinogen III + 2 S-adenosyl-L-methionine = precorrin-2 + 2 S-adenosyl-L-homocysteine + H(+). It participates in cofactor biosynthesis; adenosylcobalamin biosynthesis; precorrin-2 from uroporphyrinogen III: step 1/1. It functions in the pathway porphyrin-containing compound metabolism; siroheme biosynthesis; precorrin-2 from uroporphyrinogen III: step 1/1. Catalyzes the two successive C-2 and C-7 methylation reactions involved in the conversion of uroporphyrinogen III to precorrin-2 via the intermediate formation of precorrin-1. It is a step in the biosynthesis of both cobalamin (vitamin B12) and siroheme. The protein is Uroporphyrinogen-III C-methyltransferase of Pseudomonas fluorescens.